The primary structure comprises 419 residues: Glutamate dehydrogenase (419 aa).

Lys105 is an active-site residue. 219–225 lines the NAD(+) pocket; sequence GYGNAGY.

This sequence belongs to the Glu/Leu/Phe/Val dehydrogenases family. Homohexamer.

It localises to the cytoplasm. The catalysed reaction is L-glutamate + NAD(+) + H2O = 2-oxoglutarate + NH4(+) + NADH + H(+). It catalyses the reaction L-glutamate + NADP(+) + H2O = 2-oxoglutarate + NH4(+) + NADPH + H(+). In Thermococcus litoralis (strain ATCC 51850 / DSM 5473 / JCM 8560 / NS-C), this protein is Glutamate dehydrogenase (gdhA).